The primary structure comprises 201 residues: Protease (201 aa).

Active-site residues include His53, Asp70, and Cys121.

The protein belongs to the peptidase C5 family. As to quaternary structure, interacts with protease cofactor pVI-C; this interaction is necessary for protease activation.

It is found in the virion. Its subcellular location is the host nucleus. It carries out the reaction Cleaves proteins of the adenovirus and its host cell at two consensus sites: -Yaa-Xaa-Gly-Gly-|-Xaa- and -Yaa-Xaa-Gly-Xaa-|-Gly- (in which Yaa is Met, Ile or Leu, and Xaa is any amino acid).. Its activity is regulated as follows. Requires DNA and protease cofactor for maximal activation. Inside nascent virions, becomes partially activated by binding to the viral DNA, allowing it to cleave the cofactor that binds to the protease and fully activates it. Actin, like the viral protease cofactor, seems to act as a cofactor in the cleavage of cytokeratin 18 and of actin itself. Its function is as follows. Cleaves viral precursor proteins (pTP, pIIIa, pVI, pVII, pVIII, and pX) inside newly assembled particles giving rise to mature virions. Protease complexed to its cofactor slides along the viral DNA to specifically locate and cleave the viral precursors. Mature virions have a weakened organization compared to the unmature virions, thereby facilitating subsequent uncoating. Without maturation, the particle lacks infectivity and is unable to uncoat. Late in adenovirus infection, in the cytoplasm, may participate in the cytoskeleton destruction. Cleaves host cell cytoskeletal keratins K7 and K18. The chain is Protease from Equine adenovirus B serotype 2 (EAdV-2).